The following is a 703-amino-acid chain: MAERTLVTSALPYANGPLHIGHAVEYVQTDIYVRFLRSCGRDVVYFCADDTHGTPIELNAAKQGLKPEEFIARFHEEHQRDFHDLDVRFDYFHSTNSPENRQYAELIYGRLKEKGDIERRNIEQTYCENDRRFLPDRFIKGTCPNCKASDQYGDACEKCGKAYDPTDLIDARCALCGTPPVRKHSEHLFFKLSRHEDFLQDVLRKPGFIHPGLATQLQGFFEKGLSDWDISRDGPYFGFAIPGETDKYFYVWLDAPIGYIATTEKWAKETGKAKSALDYWSADADTRIIHFIGKDIVYFHALFWPAVLNVAGFHIPSEIKVHGHLMLNGEKMSKTRGTMVPVRDYLDQLDPSYLRYFYAANLGPGVEDLDLNLKDFRQRVNGELVNNVGNLANRALSLLAGPLEKRLAPGRAEGPGRELVEAALARVPEVRDAFDKLEYRSAIRVITEIASAANGFLQTAAPWAQVKKDAEVARADLSDAADVAYLLGALLAPVTPRLSEKLFAQLGAEPLTFQALEGAKYPLLDRSRPIGTPEPLLPRLEEERVNAIIKLPEGAAAPQAAEARPAKGAKTEKKPAEAPAATQAAAPSAGAAESPGEIEYDDFAKVVLKAGKVLAAEKVQKADKLLKLTVDVGEGSPRTIVSGIAEAFAPEALTGRNVVVVANLKPRKLKGIESRGMLLTAGPGGKELSLLDPGDVAPGSEVK.

The 'HIGH' region signature appears at 12–22 (PYANGPLHIGH). Residues cysteine 143, cysteine 146, cysteine 156, and cysteine 159 each coordinate Zn(2+). Residues 331-335 (KMSKT) carry the 'KMSKS' region motif. An ATP-binding site is contributed by lysine 334. 2 stretches are compositionally biased toward low complexity: residues 556 to 568 (AAPQ…PAKG) and 577 to 594 (EAPA…AAES). Disordered regions lie at residues 556–594 (AAPQ…AAES) and 682–703 (GPGG…SEVK). Residues 602 to 703 (DFAKVVLKAG…GDVAPGSEVK (102 aa)) enclose the tRNA-binding domain.

It belongs to the class-I aminoacyl-tRNA synthetase family. MetG type 1 subfamily. Homodimer. Zn(2+) is required as a cofactor.

The protein resides in the cytoplasm. It carries out the reaction tRNA(Met) + L-methionine + ATP = L-methionyl-tRNA(Met) + AMP + diphosphate. Is required not only for elongation of protein synthesis but also for the initiation of all mRNA translation through initiator tRNA(fMet) aminoacylation. This is Methionine--tRNA ligase from Myxococcus xanthus (strain DK1622).